The chain runs to 127 residues: uncharacterized protein (127 aa).

The first 23 residues, Met-1 to Gly-23, serve as a signal peptide directing secretion.

This is an uncharacterized protein from Arabidopsis thaliana (Mouse-ear cress).